A 316-amino-acid chain; its full sequence is NADH-quinone oxidoreductase subunit H (316 aa).

Transmembrane regions (helical) follow at residues 6–26, 74–94, 98–118, 145–165, 177–197, 233–253, 256–276, and 296–316; these read PAVVIGILLSTVIVAAWLIWV, FVIAPAIVMVTMLLGFVVVPF, VGVIDFNFGLLYFFALSSLAV, ISYEVFMGLAAMGVVMLAGSF, GWYVLPQFAGFLAFLVAAVAE, YLGITLNSAILVTLFFGGWLG, FLPPLAWFILKTLVFILFFIL, and VMLPLTLANIVVTGAVGLSVP.

The protein belongs to the complex I subunit 1 family. As to quaternary structure, NDH-1 is composed of 14 different subunits. Subunits NuoA, H, J, K, L, M, N constitute the membrane sector of the complex.

The protein resides in the cell inner membrane. It carries out the reaction a quinone + NADH + 5 H(+)(in) = a quinol + NAD(+) + 4 H(+)(out). In terms of biological role, NDH-1 shuttles electrons from NADH, via FMN and iron-sulfur (Fe-S) centers, to quinones in the respiratory chain. The immediate electron acceptor for the enzyme in this species is believed to be ubiquinone. Couples the redox reaction to proton translocation (for every two electrons transferred, four hydrogen ions are translocated across the cytoplasmic membrane), and thus conserves the redox energy in a proton gradient. This subunit may bind ubiquinone. This chain is NADH-quinone oxidoreductase subunit H, found in Methylococcus capsulatus (strain ATCC 33009 / NCIMB 11132 / Bath).